A 93-amino-acid chain; its full sequence is Translation initiation factor IF-1 (93 aa).

An S1-like domain is found at 1–72 (MAKEELIQFE…EKGRLIFRHK (72 aa)). The disordered stretch occupies residues 70–93 (RHKDERPGGPPRSGPPRGGQFRRR).

Belongs to the IF-1 family. As to quaternary structure, component of the 30S ribosomal translation pre-initiation complex which assembles on the 30S ribosome in the order IF-2 and IF-3, IF-1 and N-formylmethionyl-tRNA(fMet); mRNA recruitment can occur at any time during PIC assembly.

Its subcellular location is the cytoplasm. In terms of biological role, one of the essential components for the initiation of protein synthesis. Stabilizes the binding of IF-2 and IF-3 on the 30S subunit to which N-formylmethionyl-tRNA(fMet) subsequently binds. Helps modulate mRNA selection, yielding the 30S pre-initiation complex (PIC). Upon addition of the 50S ribosomal subunit IF-1, IF-2 and IF-3 are released leaving the mature 70S translation initiation complex. This chain is Translation initiation factor IF-1, found in Nitrobacter winogradskyi (strain ATCC 25391 / DSM 10237 / CIP 104748 / NCIMB 11846 / Nb-255).